The sequence spans 138 residues: 10 kDa chaperonin 1, chloroplastic (138 aa).

Residues 1 to 61 (MASSFITVPK…VPQADRVLVR (61 aa)) constitute a chloroplast transit peptide. The cpn-10 domain stretch occupies residues 50-137 (KVVPQADRVL…CKESDLLAIV (88 aa)).

Belongs to the GroES chaperonin family. Expressed at low levels in germinating seeds, seedlings, rosettes leaves, flowers and siliques.

Its subcellular location is the plastid. It is found in the chloroplast. Its function is as follows. Functions as a co-chaperone for protein folding in chloroplasts. The chain is 10 kDa chaperonin 1, chloroplastic from Arabidopsis thaliana (Mouse-ear cress).